The following is a 1041-amino-acid chain: Pre-mRNA-splicing factor ATP-dependent RNA helicase DHX16 (1041 aa).

Disordered regions lie at residues 101–207 and 371–391; these read EDSE…AYEE and LQGD…QKES. Ser-103, Ser-106, and Ser-107 each carry phosphoserine. Residues 119–130 show a composition bias toward basic residues; the sequence is QKKRKKRKHLRK. Phosphoserine is present on Ser-160. Over residues 166–207 the composition is skewed to basic and acidic residues; sequence RTERERLQDLEERDAFAERVRQRDKDRTRNVLERSDKKAYEE. Residues 381 to 391 are compositionally biased toward polar residues; sequence PTSTQAQQKES. Residues 409–573 form the Helicase ATP-binding domain; sequence LAAIANHQVL…FDDAPVFRIP (165 aa). 422–429 serves as a coordination point for ATP; it reads GETGSGKT. The DEAH box signature appears at 520–523; that stretch reads DEAH. The Helicase C-terminal domain maps to 598-771; sequence SVLQIHVTQP…NVVLLLKSLG (174 aa). A Phosphothreonine modification is found at Thr-712.

Belongs to the DEAD box helicase family. DEAH subfamily. DDX16/PRP8 sub-subfamily. As to quaternary structure, component of pre-catalytic spliceosome complexes. Component of the minor spliceosome, which splices U12-type introns. Interacts with GPKOW. Interacts with TRIM6. Interacts with RIGI. In terms of tissue distribution, expressed in the spleen, thyroid and testis. Also expressed in the brain and cerebellum.

It is found in the nucleus. The protein resides in the nucleoplasm. The protein localises to the cytoplasm. The enzyme catalyses ATP + H2O = ADP + phosphate + H(+). Functionally, required for pre-mRNA splicing as a component of the spliceosome. Contributes to pre-mRNA splicing after spliceosome formation and prior to the first transesterification reaction. As a component of the minor spliceosome, involved in the splicing of U12-type introns in pre-mRNAs. Also plays a role in innate antiviral response by acting as a pattern recognition receptor sensing splicing signals in viral RNA. Mechanistically, TRIM6 promotes the interaction between unanchored 'Lys-48'-polyubiquitin chains and DHX16, leading to DHX16 interaction with RIGI and ssRNA to amplify RIGI-dependent innate antiviral immune responses. The protein is Pre-mRNA-splicing factor ATP-dependent RNA helicase DHX16 (DHX16) of Homo sapiens (Human).